We begin with the raw amino-acid sequence, 644 residues long: Protein cueball (644 aa).

The N-terminal stretch at 1–26 (MIRIRFGMDVLLVLLLATCLLSPTHG) is a signal peptide. At 27 to 531 (TPLEWDFAVT…VCLTPTVWTS (505 aa)) the chain is on the extracellular side. N-linked (GlcNAc...) asparagine glycans are attached at residues N82 and N108. LDL-receptor class B repeat units follow at residues 121 to 166 (TNLF…DVCR), 167 to 211 (RKLY…DQLS), and 212 to 257 (DRLF…TNDA). N-linked (GlcNAc...) asparagine glycosylation is found at N175 and N190. The N-linked (GlcNAc...) asparagine glycan is linked to N313. EGF-like domains lie at 398 to 430 (EIRE…FTGE) and 433 to 471 (EVSV…ARCE). Intrachain disulfides connect C402–C411, C406–C421, C437–C447, C441–C459, and C461–C470. 2 N-linked (GlcNAc...) asparagine glycosylation sites follow: N473 and N508. The chain crosses the membrane as a helical span at residues 532 to 552 (SVIIILVVGIVSSLLLVAVIV). Over 553–644 (HGIRRLYKPK…LIHNMEDDLY (92 aa)) the chain is Cytoplasmic.

The protein belongs to the cueball family.

It localises to the cell membrane. Its function is as follows. Has a role in spermatogenesis and oogenesis. The chain is Protein cueball from Drosophila yakuba (Fruit fly).